Here is a 1004-residue protein sequence, read N- to C-terminus: 2-oxoglutarate dehydrogenase E1 component (1004 aa).

The protein belongs to the alpha-ketoglutarate dehydrogenase family. As to quaternary structure, homodimer. Part of the 2-oxoglutarate dehydrogenase (OGDH) complex composed of E1 (2-oxoglutarate dehydrogenase), E2 (dihydrolipoamide succinyltransferase) and E3 (dihydrolipoamide dehydrogenase); the complex contains multiple copies of the three enzymatic components (E1, E2 and E3). Thiamine diphosphate is required as a cofactor.

The enzyme catalyses N(6)-[(R)-lipoyl]-L-lysyl-[protein] + 2-oxoglutarate + H(+) = N(6)-[(R)-S(8)-succinyldihydrolipoyl]-L-lysyl-[protein] + CO2. E1 component of the 2-oxoglutarate dehydrogenase (OGDH) complex which catalyzes the decarboxylation of 2-oxoglutarate, the first step in the conversion of 2-oxoglutarate to succinyl-CoA and CO(2). This is 2-oxoglutarate dehydrogenase E1 component from Brucella melitensis biotype 2 (strain ATCC 23457).